The chain runs to 137 residues: Small heat shock protein IbpA (137 aa).

Residues 28-137 (SQSNGGYPPY…ANKPRRIEIN (110 aa)) form the sHSP domain.

Belongs to the small heat shock protein (HSP20) family. In terms of assembly, monomer. Forms homomultimers of about 100-150 subunits at optimal growth temperatures. Conformation changes to monomers at high temperatures or high ionic concentrations.

The protein localises to the cytoplasm. Its function is as follows. Associates with aggregated proteins, together with IbpB, to stabilize and protect them from irreversible denaturation and extensive proteolysis during heat shock and oxidative stress. Aggregated proteins bound to the IbpAB complex are more efficiently refolded and reactivated by the ATP-dependent chaperone systems ClpB and DnaK/DnaJ/GrpE. Its activity is ATP-independent. The polypeptide is Small heat shock protein IbpA (Salmonella choleraesuis (strain SC-B67)).